A 270-amino-acid polypeptide reads, in one-letter code: BPI fold-containing family A member 1 (270 aa).

The signal sequence occupies residues 1–19 (MFLVGSLVVLCGLLAQSTA). The tract at residues 104–109 (LVGGLL) is important for surfactant activity and antibacterial properties. Asn174 carries N-linked (GlcNAc...) asparagine glycosylation. Cys196 and Cys238 are disulfide-bonded.

Belongs to the BPI/LBP/Plunc superfamily. Plunc family. Monomer. Interacts (via N-terminus) with SCNN1B, a subunit of the heterotrimeric epithelial sodium channel (ENaC); this inhibits proteolytic activation of ENaC. As to expression, detected in adult nasal epithelium, heart, lung, spleen, testis and salivary gland, and in embryonic nasal epithelium, lung, salivary gland and thymus.

It is found in the secreted. In terms of biological role, lipid-binding protein which shows high specificity for the surfactant phospholipid dipalmitoylphosphatidylcholine (DPPC). Plays a role in the innate immune responses of the upper airways. Reduces the surface tension in secretions from airway epithelia and inhibits the formation of biofilm by pathogenic Gram-negative bacteria, such as P.aeruginosa and K.pneumoniae. Negatively regulates proteolytic cleavage of SCNN1G, an event that is required for activation of the epithelial sodium channel (ENaC), and thereby contributes to airway surface liquid homeostasis and proper clearance of mucus. Plays a role in the airway inflammatory response after exposure to irritants. May attract macrophages and neutrophils. The protein is BPI fold-containing family A member 1 (Bpifa1) of Rattus norvegicus (Rat).